The sequence spans 230 residues: MGRGKIEIKRIENSTNRQVTFCKRRNGLLKKAYELSVLCDAEVALIVFSTRGRLYEYANNNIRSTIERYKKACSDSTNTSTVQEINAAYYQQESAKLRQQIQTIQNSNRNLMGDSLSSLSVKELKQVENRLEKAISRIRSKKHELLLVEIENAQKREIELDNENIYLRTKVAEVERYQQHHHQMVSGSEINAIEALASRNYFAHSIMTAGSGSGNGGSYSDPDKKILHLG.

The MADS-box domain maps to 3–57 (RGKIEIKRIENSTNRQVTFCKRRNGLLKKAYELSVLCDAEVALIVFSTRGRLYEY). The K-box domain occupies 87–177 (AAYYQQESAK…RTKVAEVERY (91 aa)). The disordered stretch occupies residues 211-230 (SGSGNGGSYSDPDKKILHLG). Over residues 221-230 (DPDKKILHLG) the composition is skewed to basic and acidic residues.

Interacts with AGL15 and AGL16.

It localises to the nucleus. In terms of biological role, probable transcription factor. Is required, together with TT16/AGL32 for the maternal control of endothelium formation, which is essential for female gametophyte development and fertilization, and seed formation. The chain is Agamous-like MADS-box protein AGL11 (AGL11) from Arabidopsis thaliana (Mouse-ear cress).